Consider the following 1297-residue polypeptide: Cingulin-like protein 1 (1297 aa).

A head region spans residues 1-550 (MELYFGEYQH…ELTQQTNEET (550 aa)). Residues 37–51 (AGSYGVSIRVQGIDG) carry the ZIM motif. Phosphoserine is present on residues serine 113, serine 203, and serine 257. Disordered stretches follow at residues 161–208 (NEVN…TSED), 245–306 (GVGE…TPTS), 364–396 (KPGL…AFPF), and 428–467 (QRSV…DGKV). Positions 197 to 206 (YGSQPNSPTS) are enriched in polar residues. The span at 268–283 (ETKKNRPDVLPFRRQD) shows a compositional bias: basic and acidic residues. Residues serine 284, serine 298, and serine 299 each carry the phosphoserine modification. The segment covering 297–306 (SSSSSTTPTS) has biased composition (low complexity). Residues 367–378 (LQRRGRSGKRNR) are compositionally biased toward basic residues. The segment covering 379–389 (INPDDRKRSRS) has biased composition (basic and acidic residues). Phosphoserine is present on residues serine 389 and serine 392. Serine 482 carries the phosphoserine modification. The interval 586–608 (SRAAGSAQGSNQAPNSPSEGNSL) is disordered. Residues 592–608 (AQGSNQAPNSPSEGNSL) show a composition bias toward polar residues. The stretch at 604–1251 (EGNSLLDQKN…LQGQLNSLKK (648 aa)) forms a coiled coil. Phosphoserine is present on residues serine 678 and serine 704. The segment at 1259-1297 (SSKVLDDSDDDDLSSDAGSLYEAPLSYAFPKDSTIASQI) is tail.

This sequence belongs to the cingulin family. In terms of assembly, homodimer or oligomer. Interacts with CD2AP and SH3BP1; probably part of a complex at cell junctions. Widely expressed. Highly expressed in the kidney and lung.

It localises to the cell junction. The protein resides in the tight junction. Its function is as follows. May be involved in anchoring the apical junctional complex, especially tight junctions, to actin-based cytoskeletons. This Mus musculus (Mouse) protein is Cingulin-like protein 1.